The primary structure comprises 694 residues: Long-chain-fatty-acid--CoA ligase 3 (694 aa).

A disordered region spans residues 1 to 25 (MSEQHSVAVGKAANEHETAPRRNVR). Serine 2 is modified (N-acetylserine). 269 to 280 (YTSGSISAPKGV) is an ATP binding site. The FACS motif lies at 527 to 576 (DGWFRTGDIVEWTPKGQLKIIDRRKNLVKTLNGEYIALEKLESVYRSNSY).

The protein belongs to the ATP-dependent AMP-binding enzyme family. As to quaternary structure, interacts with FRK1. Requires Mg(2+) as cofactor.

The protein resides in the cell membrane. The enzyme catalyses a long-chain fatty acid + ATP + CoA = a long-chain fatty acyl-CoA + AMP + diphosphate. It carries out the reaction (9Z)-octadecenoate + ATP + CoA = (9Z)-octadecenoyl-CoA + AMP + diphosphate. It catalyses the reaction hexadecanoate + ATP + CoA = hexadecanoyl-CoA + AMP + diphosphate. The catalysed reaction is (9Z)-hexadecenoate + ATP + CoA = (9Z)-hexadecenoyl-CoA + AMP + diphosphate. The enzyme catalyses (9Z)-tetradecenoate + ATP + CoA = (9Z)-tetradecenoyl-CoA + AMP + diphosphate. It carries out the reaction (9Z,12Z)-octadecadienoate + ATP + CoA = (9Z,12Z)-octadecadienoyl-CoA + AMP + diphosphate. Its function is as follows. Activates endogenous long-chain fatty acids (LCFA) by esterification of the fatty acids into metabolically active CoA-thioesters for subsequent degradation or incorporation into phospholipids. Acts preferentially on C16 and C18 fatty acids with a cis-double bond at C-9-C-10. The chain is Long-chain-fatty-acid--CoA ligase 3 (FAA3) from Saccharomyces cerevisiae (strain ATCC 204508 / S288c) (Baker's yeast).